The primary structure comprises 219 residues: RING-H2 finger protein ATL78 (219 aa).

The chain crosses the membrane as a helical span at residues 57-77 (VMVLSVLLCALVCSLGLNSII). An RING-type; atypical zinc finger spans residues 131–173 (CAICLSEFVAEERVKLLPTCHHGFHVRCIDKWLSSHSSCPTCR).

Belongs to the RING-type zinc finger family. ATL subfamily.

Its subcellular location is the membrane. It carries out the reaction S-ubiquitinyl-[E2 ubiquitin-conjugating enzyme]-L-cysteine + [acceptor protein]-L-lysine = [E2 ubiquitin-conjugating enzyme]-L-cysteine + N(6)-ubiquitinyl-[acceptor protein]-L-lysine.. The protein operates within protein modification; protein ubiquitination. The chain is RING-H2 finger protein ATL78 (ATL78) from Arabidopsis thaliana (Mouse-ear cress).